A 257-amino-acid polypeptide reads, in one-letter code: uncharacterized protein (257 aa).

The signal sequence occupies residues 1 to 26 (MKKAFILSAAAAVGLFTFGGVQQASA). Residues 80 to 135 (AKQSNVKVQDVQKTETAKPAQKTTEKAAADQNTASKAPATAEKTNTTTSAPSSVSA) form a disordered region. The segment covering 121 to 134 (EKTNTTTSAPSSVS) has biased composition (polar residues). Residues 141–254 (VELTNAERQK…ESGSIWTQQF (114 aa)) form the SCP domain.

This is an uncharacterized protein from Bacillus subtilis (strain 168).